Consider the following 526-residue polypeptide: Adenylyl cyclase-associated protein (526 aa).

The adenyl cyclase-binding stretch occupies residues 1–168 (MPDSKYTMQG…RQSKYFAYLS (168 aa)). 3 disordered regions span residues 43–72 (EASK…PEVE), 255–304 (QSTK…DANK), and 326–371 (KVDK…RPPR). The span at 45–64 (SKNNKPSDSGADANTTNEPS) shows a compositional bias: polar residues. The SH3-binding motif lies at 169 to 369 (ALSEGAPLFS…KPSTLKTKRP (201 aa)). Positions 262–274 (ATSSPSPASATAA) are enriched in low complexity. The span at 275–285 (PAPPPPPPAPP) shows a compositional bias: pro residues. Residues 290 to 302 (EISNDTPATSSDA) show a composition bias toward polar residues. The span at 326 to 338 (KVDKSQQTHKNPE) shows a compositional bias: basic and acidic residues. Low complexity predominate over residues 342–352 (SSTVSSTGSKS). The interaction with SH3 domain of ABP1 stretch occupies residues 354 to 361 (PPPRPKKP). A compositionally biased stretch (basic residues) spans 357-370 (RPKKPSTLKTKRPP). The C-CAP/cofactor C-like domain maps to 369-504 (PPRKELVGNK…EDDDYVEFPI (136 aa)). A dimerization and actin-binding region spans residues 370–526 (PRKELVGNKW…FKSAVFEHAG (157 aa)). Ser-454 carries the post-translational modification Phosphoserine.

The protein belongs to the CAP family. In terms of assembly, homodimer.

The protein localises to the cytoplasm. It is found in the cytoskeleton. It localises to the actin patch. Its function is as follows. The N-terminal domain binds to adenylyl cyclase, thereby enabling adenylyl cyclase to be activated by upstream regulatory signals, such as Ras. The C-terminal domain is required for normal cellular morphology and growth control. This chain is Adenylyl cyclase-associated protein (SRV2), found in Saccharomyces cerevisiae (strain ATCC 204508 / S288c) (Baker's yeast).